The primary structure comprises 156 residues: Succinate dehydrogenase assembly factor 2-B, mitochondrial (156 aa).

The N-terminal 12 residues, 1 to 12, are a transit peptide targeting the mitochondrion; it reads MLRQILSSAVAK.

It belongs to the SDHAF2 family. Interacts with the flavoprotein subunit within the SDH catalytic dimer.

The protein resides in the mitochondrion matrix. Functionally, plays an essential role in the assembly of succinate dehydrogenase (SDH), an enzyme complex (also referred to as respiratory complex II) that is a component of both the tricarboxylic acid (TCA) cycle and the mitochondrial electron transport chain, and which couples the oxidation of succinate to fumarate with the reduction of ubiquinone (coenzyme Q) to ubiquinol. Required for flavinylation (covalent attachment of FAD) of the flavoprotein subunit of the SDH catalytic dimer. This Drosophila willistoni (Fruit fly) protein is Succinate dehydrogenase assembly factor 2-B, mitochondrial.